The following is a 531-amino-acid chain: Lysine--tRNA ligase, mitochondrial (531 aa).

The N-terminal 18 residues, 1–18, are a transit peptide targeting the mitochondrion; sequence MISRGLLSKGILSIIKRK.

The protein belongs to the class-II aminoacyl-tRNA synthetase family.

It is found in the mitochondrion. The catalysed reaction is tRNA(Lys) + L-lysine + ATP = L-lysyl-tRNA(Lys) + AMP + diphosphate. This chain is Lysine--tRNA ligase, mitochondrial (msk1), found in Schizosaccharomyces pombe (strain 972 / ATCC 24843) (Fission yeast).